A 313-amino-acid chain; its full sequence is MRSPGRPSVTSPPLRGEIVAAFGRHFLVKTADESTLTCVLRGKKSGAACGDWVEIYQTASEQGVIERILPRSALLYRSDLSREKLIAANATQVIIVVAPVPSFSEELINRCLVAAESQQLSVLIVLNKTDLLGPSKVALNGLSLYRELDYTLLPISARNDVKPLLPYLEDNLSVLVGQSGMGKSTIINALVPDAERATGDISPTLDAGRHTTTHARLYHLDRNARIIDSPGIQQFGLQHLSIEAIAWGFREFRPYIGKCKFNNCRHSGEPGCALANAMRESEVSVRRIDLYHKLIASLNTNRIPSSSSRTKIQ.

The region spanning 82–235 (REKLIAANAT…IIDSPGIQQF (154 aa)) is the CP-type G domain. GTP-binding positions include 127 to 130 (NKTD) and 177 to 185 (GQSGMGKST). Residues C259, C264, H266, and C272 each contribute to the Zn(2+) site.

Belongs to the TRAFAC class YlqF/YawG GTPase family. RsgA subfamily. Monomer. Associates with 30S ribosomal subunit, binds 16S rRNA. The cofactor is Zn(2+).

The protein localises to the cytoplasm. One of several proteins that assist in the late maturation steps of the functional core of the 30S ribosomal subunit. Helps release RbfA from mature subunits. May play a role in the assembly of ribosomal proteins into the subunit. Circularly permuted GTPase that catalyzes slow GTP hydrolysis, GTPase activity is stimulated by the 30S ribosomal subunit. This is Small ribosomal subunit biogenesis GTPase RsgA from Nitrosospira multiformis (strain ATCC 25196 / NCIMB 11849 / C 71).